The primary structure comprises 239 residues: Urease accessory protein UreE (239 aa).

Positions 185–239 (VASPLDEPHGSGLHIHGIHSHGDGHSHSHDSHSHSHDSDHGHSHSHGDHDHDHKH) are disordered. Basic and acidic residues predominate over residues 204-239 (SHGDGHSHSHDSHSHSHDSDHGHSHSHGDHDHDHKH).

The protein belongs to the UreE family.

Its subcellular location is the cytoplasm. Involved in urease metallocenter assembly. Binds nickel. Probably functions as a nickel donor during metallocenter assembly. The chain is Urease accessory protein UreE from Yersinia frederiksenii.